The sequence spans 790 residues: Probable E3 ubiquitin-protein ligase MARCHF10 (790 aa).

Residues 33–240 form a disordered region; sequence LKRQEHKKEP…PQNEPHTALS (208 aa). The segment covering 34 to 48 has biased composition (basic and acidic residues); sequence KRQEHKKEPNEKKQE. Residues 61 to 70 are compositionally biased toward low complexity; sequence FSSGSSCKQS. Ser78 bears the Phosphoserine mark. A compositionally biased stretch (basic and acidic residues) spans 218-227; sequence PLERQKKGDP. A compositionally biased stretch (polar residues) spans 230–240; it reads RPQNEPHTALS. Positions 284-308 form a coiled coil; sequence LSLNNEQENYDTEEETRTEEELLLA. Disordered regions lie at residues 323–416 and 507–569; these read GTSA…EDVS and LSPI…RHLQ. Composition is skewed to polar residues over residues 355–370, 406–416, and 511–520; these read RKTS…SSPG, GVTQVSAEDVS, and RNRNPSAASE. A compositionally biased stretch (basic and acidic residues) spans 521–533; it reads SHSEDTQGEEERA. The span at 534 to 563 shows a compositional bias: polar residues; it reads STSQAQESPLLSDLPNPQSSMALGDSPSSP. The RING-CH-type zinc finger occupies 633-703; sequence DSEEEGDLCR…EMCKQGLLVD (71 aa). The Zn(2+) site is built by Cys641, Cys644, Cys659, Cys661, His669, Cys672, Cys693, and Cys696. Residues 757–790 are disordered; it reads ERMSRNYPQPRPEESESSESGDGNESNVYPGRVI. Over residues 774-783 the composition is skewed to low complexity; sequence SESGDGNESN.

It catalyses the reaction S-ubiquitinyl-[E2 ubiquitin-conjugating enzyme]-L-cysteine + [acceptor protein]-L-lysine = [E2 ubiquitin-conjugating enzyme]-L-cysteine + N(6)-ubiquitinyl-[acceptor protein]-L-lysine.. It functions in the pathway protein modification; protein ubiquitination. E3 ubiquitin-protein ligase. E3 ubiquitin ligases accept ubiquitin from an E2 ubiquitin-conjugating enzyme in the form of a thioester and then directly transfer the ubiquitin to targeted substrates. In Rattus norvegicus (Rat), this protein is Probable E3 ubiquitin-protein ligase MARCHF10 (Marchf10).